We begin with the raw amino-acid sequence, 402 residues long: Pyridinium-3,5-bisthiocarboxylic acid mononucleotide nickel insertion protein (402 aa).

Belongs to the LarC family.

The catalysed reaction is Ni(II)-pyridinium-3,5-bisthiocarboxylate mononucleotide = pyridinium-3,5-bisthiocarboxylate mononucleotide + Ni(2+). Its function is as follows. Involved in the biosynthesis of a nickel-pincer cofactor ((SCS)Ni(II) pincer complex). Binds Ni(2+), and functions in nickel delivery to pyridinium-3,5-bisthiocarboxylic acid mononucleotide (P2TMN), to form the mature cofactor. Is thus probably required for the activation of nickel-pincer cofactor-dependent enzymes. This is Pyridinium-3,5-bisthiocarboxylic acid mononucleotide nickel insertion protein from Desulfitobacterium hafniense (strain Y51).